A 484-amino-acid chain; its full sequence is tRNA sulfurtransferase (484 aa).

One can recognise a THUMP domain in the interval 63–167 (QAFGERLACI…GDKLYMVTKR (105 aa)). ATP-binding positions include 185-186 (LI), K267, G289, and Q298. A disulfide bridge links C346 with C458. Residues 406–484 (IDTNEVVIDI…GYHNVKVYRP (79 aa)) enclose the Rhodanese domain. C458 (cysteine persulfide intermediate) is an active-site residue.

The protein belongs to the ThiI family.

Its subcellular location is the cytoplasm. The enzyme catalyses [ThiI sulfur-carrier protein]-S-sulfanyl-L-cysteine + a uridine in tRNA + 2 reduced [2Fe-2S]-[ferredoxin] + ATP + H(+) = [ThiI sulfur-carrier protein]-L-cysteine + a 4-thiouridine in tRNA + 2 oxidized [2Fe-2S]-[ferredoxin] + AMP + diphosphate. It carries out the reaction [ThiS sulfur-carrier protein]-C-terminal Gly-Gly-AMP + S-sulfanyl-L-cysteinyl-[cysteine desulfurase] + AH2 = [ThiS sulfur-carrier protein]-C-terminal-Gly-aminoethanethioate + L-cysteinyl-[cysteine desulfurase] + A + AMP + 2 H(+). The protein operates within cofactor biosynthesis; thiamine diphosphate biosynthesis. In terms of biological role, catalyzes the ATP-dependent transfer of a sulfur to tRNA to produce 4-thiouridine in position 8 of tRNAs, which functions as a near-UV photosensor. Also catalyzes the transfer of sulfur to the sulfur carrier protein ThiS, forming ThiS-thiocarboxylate. This is a step in the synthesis of thiazole, in the thiamine biosynthesis pathway. The sulfur is donated as persulfide by IscS. The polypeptide is tRNA sulfurtransferase (Shewanella sp. (strain MR-7)).